We begin with the raw amino-acid sequence, 347 residues long: Lipopolysaccharide core heptosyltransferase OpsX (347 aa).

This sequence belongs to the glycosyltransferase 9 family.

Its pathway is bacterial outer membrane biogenesis; LPS core biosynthesis. In terms of biological role, catalyzes heptose transfer to the lipopolysaccharide core. It transfers the first L-glycero-D-manno-heptose to the phosphorylated 3-deoxy-alpha-D-manno-octulosonic acid (Kdo-P) of the inner core. In Haemophilus influenzae (strain ATCC 51907 / DSM 11121 / KW20 / Rd), this protein is Lipopolysaccharide core heptosyltransferase OpsX.